Reading from the N-terminus, the 465-residue chain is Argininosuccinate lyase (465 aa).

The protein belongs to the lyase 1 family. Argininosuccinate lyase subfamily.

It is found in the cytoplasm. It carries out the reaction 2-(N(omega)-L-arginino)succinate = fumarate + L-arginine. Its pathway is amino-acid biosynthesis; L-arginine biosynthesis; L-arginine from L-ornithine and carbamoyl phosphate: step 3/3. The sequence is that of Argininosuccinate lyase from Rhodopseudomonas palustris (strain ATCC BAA-98 / CGA009).